A 301-amino-acid polypeptide reads, in one-letter code: G-protein coupled receptor homolog U51 (301 aa).

The Extracellular portion of the chain corresponds to 1–15 (MEKETKSLAWPATAE). The helical transmembrane segment at 16 to 36 (FYGWVFIFSSIQLCTVVFLTV) threads the bilayer. Over 37–48 (RFNGFKVGREYA) the chain is Cytoplasmic. The helical transmembrane segment at 49–69 (VFTFAGMSFNCFLLPIKMGLL) threads the bilayer. Over 70–82 (SGHWTLPRDFCAI) the chain is Extracellular. The chain crosses the membrane as a helical span at residues 83-103 (LLYIDDFSAYFSSWSLVFMAI). Topologically, residues 104-122 (ERINYFCYSTPLLNENSKA) are cytoplasmic. A helical transmembrane segment spans residues 123 to 143 (LAKVCFPIVWVVSGVQALQML). The Extracellular segment spans residues 144–168 (NNYKATALQNETGQCFLAFLRSGHD). Asn153 is a glycosylation site (N-linked (GlcNAc...) asparagine; by host). A helical membrane pass occupies residues 169–189 (MWLMLVYSVVIPVMLVFFYLY). Over 190–199 (SKNFMLLKDE) the chain is Cytoplasmic. Residues 200 to 220 (LSSVTTYLCIYLLLGTIAHLP) traverse the membrane as a helical segment. The Extracellular portion of the chain corresponds to 221–238 (KAALSEIESDKIFYGLRD). Residues 239 to 259 (IFMALPVLKVYYISAMAYCMA) traverse the membrane as a helical segment. Residues 260-301 (CDDHTVPVRLCSIWLVNLCKKCFSCTRREKGSDLEVGIKMLK) are Cytoplasmic-facing.

It belongs to the G-protein coupled receptor 1 family.

It localises to the host cell membrane. This chain is G-protein coupled receptor homolog U51 (U51), found in Homo sapiens (Human).